We begin with the raw amino-acid sequence, 496 residues long: 3-octaprenyl-4-hydroxybenzoate carboxy-lyase (496 aa).

Position 181 (Asn-181) interacts with Mn(2+). Prenylated FMN contacts are provided by residues 184 to 186, 198 to 200, and 203 to 204; these read IYR, RWL, and RG. Position 247 (Glu-247) interacts with Mn(2+). Asp-296 acts as the Proton donor in catalysis.

Belongs to the UbiD family. In terms of assembly, homohexamer. It depends on prenylated FMN as a cofactor. Mn(2+) is required as a cofactor.

Its subcellular location is the cell membrane. It catalyses the reaction a 4-hydroxy-3-(all-trans-polyprenyl)benzoate + H(+) = a 2-(all-trans-polyprenyl)phenol + CO2. It functions in the pathway cofactor biosynthesis; ubiquinone biosynthesis. In terms of biological role, catalyzes the decarboxylation of 3-octaprenyl-4-hydroxy benzoate to 2-octaprenylphenol, an intermediate step in ubiquinone biosynthesis. The polypeptide is 3-octaprenyl-4-hydroxybenzoate carboxy-lyase (Aromatoleum aromaticum (strain DSM 19018 / LMG 30748 / EbN1) (Azoarcus sp. (strain EbN1))).